A 236-amino-acid chain; its full sequence is Large ribosomal subunit protein uL1 (236 aa).

Belongs to the universal ribosomal protein uL1 family. Part of the 50S ribosomal subunit.

In terms of biological role, binds directly to 23S rRNA. The L1 stalk is quite mobile in the ribosome, and is involved in E site tRNA release. Functionally, protein L1 is also a translational repressor protein, it controls the translation of the L11 operon by binding to its mRNA. This chain is Large ribosomal subunit protein uL1, found in Kocuria rhizophila (strain ATCC 9341 / DSM 348 / NBRC 103217 / DC2201).